The chain runs to 275 residues: MAGLGKPYTGHPGDAFEGLVQRIRLIVPSTLRGGDGEAGPYSPSSLPSRCAFQFHGHDGSDESFPIEYVLRLMNDWAEVPCNPYLRIQNTGVSVLFQGFFHRPHNAPGGAITPERTNVILGSTETTGLSLGDLDTIKGRLGLDARPMMASMWISCFVRMPRVQLAFRFMGPEDAGRTRRILCRAAEQAITRRRRTRRSREAYGAEAGLGVAGTGFRARGDGFGPLPLLTQGPSRPWHQALRGLKHLRIGPPALVLAAGLVLGAAIWWVVGAGARL.

Residues 1–251 are Perinuclear space-facing; that stretch reads MAGLGKPYTG…GLKHLRIGPP (251 aa). Residues 137 to 181 form an interaction with NEC1 region; it reads KGRLGLDARPMMASMWISCFVRMPRVQLAFRFMGPEDAGRTRRIL. A helical transmembrane segment spans residues 252–272; sequence ALVLAAGLVLGAAIWWVVGAG. Over 273 to 275 the chain is Nuclear; the sequence is ARL.

It belongs to the herpesviridae NEC2 protein family. As to quaternary structure, forms a heterohexameric complex with NEC1. Interacts with glycoprotein D; this interaction recruits glycoprotein D and glycoprotein M to the inner nuclear membrane. In terms of processing, phosphorylated by viral kinase US3.

It localises to the host nucleus inner membrane. Functionally, plays an essential role in virion nuclear egress, the first step of virion release from infected cell. Within the host nucleus, NEC1 interacts with the newly formed capsid through the vertexes and directs it to the inner nuclear membrane by associating with NEC2. Induces the budding of the capsid at the inner nuclear membrane as well as its envelopment into the perinuclear space. There, the NEC1/NEC2 complex promotes the fusion of the enveloped capsid with the outer nuclear membrane and the subsequent release of the viral capsid into the cytoplasm where it will reach the secondary budding sites in the host Golgi or trans-Golgi network. The sequence is that of Nuclear egress protein 2 from Homo sapiens (Human).